Here is a 316-residue protein sequence, read N- to C-terminus: Pantothenate kinase (316 aa).

Position 95-102 (95-102 (GSVAVGKS)) interacts with ATP.

It belongs to the prokaryotic pantothenate kinase family.

It localises to the cytoplasm. It catalyses the reaction (R)-pantothenate + ATP = (R)-4'-phosphopantothenate + ADP + H(+). Its pathway is cofactor biosynthesis; coenzyme A biosynthesis; CoA from (R)-pantothenate: step 1/5. This is Pantothenate kinase from Shewanella pealeana (strain ATCC 700345 / ANG-SQ1).